Consider the following 345-residue polypeptide: Achaete-scute complex protein T4 (345 aa).

Low complexity predominate over residues 78 to 92 (SESVSSLSPGSSPAP). Residues 78-109 (SESVSSLSPGSSPAPYNVDQSQSVQRRNARER) form a disordered region. Residues 99–162 (QSVQRRNARE…RIAVEYIRRL (64 aa)) enclose the bHLH domain.

As to quaternary structure, efficient DNA binding requires dimerization with another bHLH protein. Interacts with da (via bHLH motif). Interacts with Bap60. In terms of tissue distribution, l(1)SC, SC and AC strongly label the presumptive stomatogastric nervous system, while ASE is more prominent in the presumptive procephalic lobe. Associates with the somatic nuclei through nuclear cycles 9 and 10. During nuclear cycle 11 distributes uniformly in the embryo.

In terms of biological role, AS-C proteins are involved in the determination of the neuronal precursors in the peripheral nervous system and the central nervous system. Also involved in sex determination and dosage compensation. The chain is Achaete-scute complex protein T4 (sc) from Drosophila melanogaster (Fruit fly).